Consider the following 556-residue polypeptide: Formate--tetrahydrofolate ligase (556 aa).

65 to 72 (TPAGEGKS) lines the ATP pocket.

The protein belongs to the formate--tetrahydrofolate ligase family.

The catalysed reaction is (6S)-5,6,7,8-tetrahydrofolate + formate + ATP = (6R)-10-formyltetrahydrofolate + ADP + phosphate. It functions in the pathway one-carbon metabolism; tetrahydrofolate interconversion. This is Formate--tetrahydrofolate ligase from Streptococcus pneumoniae serotype 4 (strain ATCC BAA-334 / TIGR4).